The primary structure comprises 420 residues: Light-independent protochlorophyllide reductase subunit N (420 aa).

[4Fe-4S] cluster is bound by residues C21, C46, and C103.

Belongs to the BchN/ChlN family. In terms of assembly, protochlorophyllide reductase is composed of three subunits; BchL, BchN and BchB. Forms a heterotetramer of two BchB and two BchN subunits. It depends on [4Fe-4S] cluster as a cofactor.

The enzyme catalyses chlorophyllide a + oxidized 2[4Fe-4S]-[ferredoxin] + 2 ADP + 2 phosphate = protochlorophyllide a + reduced 2[4Fe-4S]-[ferredoxin] + 2 ATP + 2 H2O. Its pathway is porphyrin-containing compound metabolism; bacteriochlorophyll biosynthesis (light-independent). Component of the dark-operative protochlorophyllide reductase (DPOR) that uses Mg-ATP and reduced ferredoxin to reduce ring D of protochlorophyllide (Pchlide) to form chlorophyllide a (Chlide). This reaction is light-independent. The NB-protein (BchN-BchB) is the catalytic component of the complex. This is Light-independent protochlorophyllide reductase subunit N from Chlorobium luteolum (strain DSM 273 / BCRC 81028 / 2530) (Pelodictyon luteolum).